Reading from the N-terminus, the 222-residue chain is Cytochrome b6-f complex iron-sulfur subunit, chloroplastic (222 aa).

The N-terminal 49 residues, 1–49 (MASTALSTASNPTQLCRTRASSLCKPVKGLGFGRERIPRNITCMAGSIS), are a transit peptide targeting the chloroplast. A helical transmembrane segment spans residues 66 to 86 (LLGAISLPTFGMLVPYGSFLV). The 97-residue stretch at 109–205 (VEDWLKTHGP…ADVDDGKVVF (97 aa)) folds into the Rieske domain. Positions 151, 153, 169, and 172 each coordinate [2Fe-2S] cluster. C156 and C171 are disulfide-bonded.

Belongs to the Rieske iron-sulfur protein family. In terms of assembly, the 4 large subunits of the cytochrome b6-f complex are cytochrome b6, subunit IV (17 kDa polypeptide, petD), cytochrome f and the Rieske protein, while the 4 small subunits are petG, petL, petM and petN. The complex functions as a dimer. [2Fe-2S] cluster serves as cofactor.

The protein localises to the plastid. It localises to the chloroplast thylakoid membrane. It carries out the reaction 2 oxidized [plastocyanin] + a plastoquinol + 2 H(+)(in) = 2 reduced [plastocyanin] + a plastoquinone + 4 H(+)(out). In terms of biological role, component of the cytochrome b6-f complex, which mediates electron transfer between photosystem II (PSII) and photosystem I (PSI), cyclic electron flow around PSI, and state transitions. The protein is Cytochrome b6-f complex iron-sulfur subunit, chloroplastic (petC) of Triticum aestivum (Wheat).